Reading from the N-terminus, the 106-residue chain is Pyrimidine/purine nucleoside phosphorylase (106 aa).

The protein belongs to the nucleoside phosphorylase PpnP family.

The catalysed reaction is a purine D-ribonucleoside + phosphate = a purine nucleobase + alpha-D-ribose 1-phosphate. The enzyme catalyses adenosine + phosphate = alpha-D-ribose 1-phosphate + adenine. It carries out the reaction cytidine + phosphate = cytosine + alpha-D-ribose 1-phosphate. It catalyses the reaction guanosine + phosphate = alpha-D-ribose 1-phosphate + guanine. The catalysed reaction is inosine + phosphate = alpha-D-ribose 1-phosphate + hypoxanthine. The enzyme catalyses thymidine + phosphate = 2-deoxy-alpha-D-ribose 1-phosphate + thymine. It carries out the reaction uridine + phosphate = alpha-D-ribose 1-phosphate + uracil. It catalyses the reaction xanthosine + phosphate = alpha-D-ribose 1-phosphate + xanthine. Catalyzes the phosphorolysis of diverse nucleosides, yielding D-ribose 1-phosphate and the respective free bases. Can use uridine, adenosine, guanosine, cytidine, thymidine, inosine and xanthosine as substrates. Also catalyzes the reverse reactions. The chain is Pyrimidine/purine nucleoside phosphorylase from Burkholderia cenocepacia (strain ATCC BAA-245 / DSM 16553 / LMG 16656 / NCTC 13227 / J2315 / CF5610) (Burkholderia cepacia (strain J2315)).